We begin with the raw amino-acid sequence, 169 residues long: Lipoprotein signal peptidase (169 aa).

Topologically, residues 1 to 9 are cytoplasmic; that stretch reads MPDVDRFGR. A helical transmembrane segment spans residues 10–30; it reads LPWLWITVLVFVLDQVSKAFF. At 31–67 the chain is on the periplasmic side; it reads QAELSMYQQIVVIPDLFSWTLAYNTGAAFSFLADSSG. Residues 68-89 form a helical membrane-spanning segment; that stretch reads WQRWLFALIAIVVSASLVVWLK. Over 90-96 the chain is Cytoplasmic; that stretch reads RLKKGET. A helical transmembrane segment spans residues 97-118; the sequence is WLAIALALVLGGALGNLYDRMV. Residues 119-140 lie on the Periplasmic side of the membrane; that stretch reads LGHVVDFILVHWQNRWYFPAFN. Catalysis depends on residues aspartate 124 and aspartate 143. A helical transmembrane segment spans residues 141–154; the sequence is LADSAITVGAVMLA. The Cytoplasmic portion of the chain corresponds to 155–169; the sequence is LDMFRSKKSGEAAHG.

This sequence belongs to the peptidase A8 family. As to quaternary structure, monomer in the crystal.

It localises to the cell inner membrane. It carries out the reaction Release of signal peptides from bacterial membrane prolipoproteins. Hydrolyzes -Xaa-Yaa-Zaa-|-(S,diacylglyceryl)Cys-, in which Xaa is hydrophobic (preferably Leu), and Yaa (Ala or Ser) and Zaa (Gly or Ala) have small, neutral side chains.. It functions in the pathway protein modification; lipoprotein biosynthesis (signal peptide cleavage). Inhibited by globomycin. In terms of biological role, this protein specifically catalyzes the removal of signal peptides from prolipoproteins. The sequence is that of Lipoprotein signal peptidase from Pseudomonas aeruginosa (strain ATCC 15692 / DSM 22644 / CIP 104116 / JCM 14847 / LMG 12228 / 1C / PRS 101 / PAO1).